The following is a 357-amino-acid chain: Glycerol-3-phosphate dehydrogenase [NAD(P)+] (357 aa).

NADPH-binding residues include S30, F31, R51, and K124. 2 residues coordinate sn-glycerol 3-phosphate: K124 and G152. A156 is a binding site for NADPH. Positions 207, 260, 270, 271, and 272 each coordinate sn-glycerol 3-phosphate. K207 (proton acceptor) is an active-site residue. R271 is a binding site for NADPH. E297 serves as a coordination point for NADPH.

It belongs to the NAD-dependent glycerol-3-phosphate dehydrogenase family.

It is found in the cytoplasm. It catalyses the reaction sn-glycerol 3-phosphate + NAD(+) = dihydroxyacetone phosphate + NADH + H(+). The catalysed reaction is sn-glycerol 3-phosphate + NADP(+) = dihydroxyacetone phosphate + NADPH + H(+). It participates in membrane lipid metabolism; glycerophospholipid metabolism. Functionally, catalyzes the reduction of the glycolytic intermediate dihydroxyacetone phosphate (DHAP) to sn-glycerol 3-phosphate (G3P), the key precursor for phospholipid synthesis. The sequence is that of Glycerol-3-phosphate dehydrogenase [NAD(P)+] from Acinetobacter baumannii (strain SDF).